The primary structure comprises 434 residues: O-phosphoseryl-tRNA(Sec) selenium transferase (434 aa).

Residues 1–40 (MGLNITGLIPKHMENRGKLTLKENLKIIENILEQRKAPEN) form a tetramerization region. R71 is a binding site for pyridoxal 5'-phosphate. The tract at residues 92–102 (GRSGNLIDPQP) is phosphate loop (P-loop). Positions 93, 94, and 101 each coordinate substrate. K277 carries the N6-(pyridoxal phosphate)lysine modification. Residue R306 participates in substrate binding.

The protein belongs to the SepSecS family. In terms of assembly, homotetramer. Requires pyridoxal 5'-phosphate as cofactor.

It catalyses the reaction O-phospho-L-seryl-tRNA(Sec) + selenophosphate + H2O = L-selenocysteinyl-tRNA(Sec) + 2 phosphate. The protein operates within aminoacyl-tRNA biosynthesis; selenocysteinyl-tRNA(Sec) biosynthesis; selenocysteinyl-tRNA(Sec) from L-seryl-tRNA(Sec) (archaeal/eukaryal route): step 2/2. Its function is as follows. Converts O-phosphoseryl-tRNA(Sec) to selenocysteinyl-tRNA(Sec) required for selenoprotein biosynthesis. In Methanocaldococcus jannaschii (strain ATCC 43067 / DSM 2661 / JAL-1 / JCM 10045 / NBRC 100440) (Methanococcus jannaschii), this protein is O-phosphoseryl-tRNA(Sec) selenium transferase (spcS).